Reading from the N-terminus, the 1450-residue chain is M-protein, striated muscle (1450 aa).

The interval 66–87 is disordered; it reads AHEAMQESRKRTHEQKSHASDE. 2 Ig-like C2-type domains span residues 142–233 and 254–359; these read PEIL…CAVV and PLSY…AFLF. Fibronectin type-III domains lie at 373–468, 501–596, 602–695, 698–800, and 803–900; these read APMD…ALDP, PPTN…PQDI, APGR…VQAA, CPSY…TMPE, and PAYD…ASPG. 5 consecutive Ig-like C2-type domains span residues 899–995, 1002–1115, 1118–1204, 1225–1322, and 1333–1422; these read PGTK…LMTL, PTIP…FLRK, PHFS…LELS, PLKI…QRLK, and KVIG…VTVS.

Expressed in pectoralis and cardiac muscle.

In terms of biological role, is a structural constituent of myofibrillar M-band in striated muscle. The chain is M-protein, striated muscle from Gallus gallus (Chicken).